A 69-amino-acid polypeptide reads, in one-letter code: Antimicrobial peptide ISAMP (69 aa).

The N-terminal stretch at 1-23 (MRAVAIFIVTLLVLECVYFVMSE) is a signal peptide.

In terms of tissue distribution, expressed in the fat body, hemocytes and salivary glands of partially-fed female ticks. Not expressed in the midgut.

The protein resides in the secreted. Its function is as follows. Has antimicrobial activity against B.cereus (MIC=5.8 ug/ml), B.subtilis (MIC=12.3 ug/ml), S.aureus (MIC=10.4 ug/ml), E.coli Edl 933 (MIC=3.2 ug/ml) and E.coli MG/655 (MIC=4.2 ug/ml). Non-hemolytic. This is Antimicrobial peptide ISAMP from Ixodes scapularis (Black-legged tick).